The chain runs to 824 residues: Mucosa-associated lymphoid tissue lymphoma translocation protein 1 (824 aa).

The disordered stretch occupies residues 1 to 27 (MSLLGDPLQALPPSAAPTGPLLAPPAG). At serine 2 the chain carries N-acetylserine. Positions 11-27 (LPPSAAPTGPLLAPPAG) are enriched in low complexity. Residues 39–126 (RRLSELLDQA…EVLQLLSPPG (88 aa)) form the Death domain. 2 Ig-like C2-type domains span residues 125–201 (PGIK…FEFS) and 212–305 (PESF…KKVE). Serine 135 carries the phosphoserine modification. Intrachain disulfides connect cysteine 147–cysteine 190 and cysteine 248–cysteine 290. The interval 348-562 (IGNMNYREHP…SLSEKRALTD (215 aa)) is caspase-like. The Nuclear export signal signature appears at 369 to 376 (LTNLLRQL). Residues histidine 415 and cysteine 464 contribute to the active site.

It belongs to the peptidase C14B family. In terms of assembly, homooligomer; forms oligomers which bind to TRAF6. Forms a complex with CARD14 and MALT1; resulting in the formation of a CBM (CARD14-BCL10-MALT1) complex. Forms a complex with CARD11 and MALT1; resulting in the formation of a CBM (CARD11-BCL10-MALT1) complex. Forms a complex with CARD9 and MALT1; resulting in the formation of a CBM (CARD9-BCL10-MALT1) complex. As to expression, highly expressed in peripheral blood mononuclear cells. Detected at lower levels in bone marrow, thymus and lymph node, and at very low levels in colon and lung.

It is found in the cytoplasm. It localises to the perinuclear region. The protein localises to the nucleus. Protease that enhances BCL10-induced activation: acts via formation of CBM complexes that channel adaptive and innate immune signaling downstream of CARD domain-containing proteins (CARD9, CARD11 and CARD14) to activate NF-kappa-B and MAP kinase p38 pathways which stimulate expression of genes encoding pro-inflammatory cytokines and chemokines. Mediates BCL10 cleavage: MALT1-dependent BCL10 cleavage plays an important role in T-cell antigen receptor-induced integrin adhesion. Involved in the induction of T helper 17 cells (Th17) differentiation. Cleaves RC3H1 and ZC3H12A in response to T-cell receptor (TCR) stimulation which releases their cooperatively repressed targets to promote Th17 cell differentiation. Also mediates cleavage of N4BP1 in T-cells following TCR-mediated activation, leading to N4BP1 inactivation. May also have ubiquitin ligase activity: binds to TRAF6, inducing TRAF6 oligomerization and activation of its ligase activity. The protein is Mucosa-associated lymphoid tissue lymphoma translocation protein 1 of Homo sapiens (Human).